We begin with the raw amino-acid sequence, 270 residues long: Phosphonoacetaldehyde hydrolase (270 aa).

Catalysis depends on D11, which acts as the Nucleophile. Positions 11 and 13 each coordinate Mg(2+). The Schiff-base intermediate with substrate role is filled by K53. Mg(2+) is bound at residue D187.

This sequence belongs to the HAD-like hydrolase superfamily. PhnX family. In terms of assembly, homodimer. Requires Mg(2+) as cofactor.

The catalysed reaction is phosphonoacetaldehyde + H2O = acetaldehyde + phosphate + H(+). Involved in phosphonate degradation. The chain is Phosphonoacetaldehyde hydrolase from Salmonella gallinarum (strain 287/91 / NCTC 13346).